Consider the following 421-residue polypeptide: Inhibitor of growth protein 3 (421 aa).

Residues 129–164 form a disordered region; sequence PSQPVNNHHAHSHTPVEKRKYNPTSHHTATDHIPEK. Glycyl lysine isopeptide (Lys-Gly) (interchain with G-Cter in SUMO2) cross-links involve residues lysine 148, lysine 165, and lysine 167. At lysine 181 the chain carries N6-acetyllysine. Lysine 256 is covalently cross-linked (Glycyl lysine isopeptide (Lys-Gly) (interchain with G-Cter in SUMO2)). An N6-acetyllysine modification is found at lysine 264. The segment at 286-324 is disordered; that stretch reads TQNASSSAADSRSGRKSKNNTKSSSQQSSSSSSSSSSSS. The segment covering 308 to 324 has biased composition (low complexity); that stretch reads SSSQQSSSSSSSSSSSS. A PHD-type zinc finger spans residues 363 to 412; sequence PRYCICNQVSYGEMVGCDNQDCPIEWFHYGCVGLTEAPKGKWFCPQCTAA. Residues cysteine 366, cysteine 368, cysteine 379, cysteine 384, histidine 390, cysteine 393, cysteine 406, and cysteine 409 each coordinate Zn(2+).

This sequence belongs to the ING family. In terms of assembly, interacts with H3K4me3 and to a lesser extent with H3K4me2. Component of the NuA4 histone acetyltransferase complex which contains the catalytic subunit KAT5/TIP60 and the subunits EP400, TRRAP/PAF400, BRD8/SMAP, EPC1, DMAP1/DNMAP1, RUVBL1/TIP49, RUVBL2, ING3, actin, ACTL6A/BAF53A, MORF4L1/MRG15, MORF4L2/MRGX, MRGBP, YEATS4/GAS41, VPS72/YL1 and MEAF6. The NuA4 complex interacts with MYC. HTATTIP/TIP60, EPC1, and ING3 together constitute a minimal HAT complex termed Piccolo NuA4. Component of a SWR1-like complex.

It localises to the nucleus. Its function is as follows. Component of the NuA4 histone acetyltransferase (HAT) complex which is involved in transcriptional activation of select genes principally by acetylation of nucleosomal histones H4 and H2A. This modification may both alter nucleosome - DNA interactions and promote interaction of the modified histones with other proteins which positively regulate transcription. This complex may be required for the activation of transcriptional programs associated with oncogene and proto-oncogene mediated growth induction, tumor suppressor mediated growth arrest and replicative senescence, apoptosis, and DNA repair. NuA4 may also play a direct role in DNA repair when directly recruited to sites of DNA damage. Component of a SWR1-like complex that specifically mediates the removal of histone H2A.Z/H2AZ1 from the nucleosome. The polypeptide is Inhibitor of growth protein 3 (Ing3) (Rattus norvegicus (Rat)).